The following is a 47-amino-acid chain: Large ribosomal subunit protein bL34 (47 aa).

It belongs to the bacterial ribosomal protein bL34 family.

This Rhodococcus erythropolis (strain PR4 / NBRC 100887) protein is Large ribosomal subunit protein bL34.